Consider the following 137-residue polypeptide: Protein Turandot X (137 aa).

Residues 1 to 24 (MRVPVFQLSCLLGLIVCLLCSVKA) form the signal peptide.

It belongs to the Turandot family.

It localises to the secreted. Its function is as follows. A humoral factor that may play a role in stress tolerance. The sequence is that of Protein Turandot X from Drosophila pseudoobscura pseudoobscura (Fruit fly).